The following is a 641-amino-acid chain: MLV-related proviral Env polyprotein (641 aa).

The signal sequence occupies residues Met1–Ser32. The Extracellular segment spans residues Val33–Leu581. N-linked (GlcNAc...) asparagine glycosylation is found at Asn43 and Asn58. Disulfide bonds link Cys109–Cys126 and Cys118–Cys131. The disordered stretch occupies residues Arg256–Thr281. N-linked (GlcNAc...) asparagine glycosylation is present at Asn297. 6 disulfide bridges follow: Cys307/Cys310, Cys307/Cys534, Cys337/Cys391, Cys356/Cys368, Cys398/Cys411, and Cys526/Cys533. Residues Cys307–Cys310 carry the CXXC motif. N-linked (GlcNAc...) asparagine glycosylation occurs at Asn336. Residue Asn369 is glycosylated (N-linked (GlcNAc...) asparagine). Residues Val443 to Val463 form a fusion peptide region. Coiled-coil stretches lie at residues Val471–Leu520 and Lys530–Gly566. Residues Leu509–Leu525 form an immunosuppression region. The CX6CC signature appears at Cys526–Cys534. Residues Ile582–Ile602 form a helical membrane-spanning segment. A lipid anchor (S-palmitoyl cysteine) is attached at Cys601. Residues Leu603 to Glu641 lie on the Cytoplasmic side of the membrane. Residues Tyr626 to Leu629 carry the YXXL motif; contains endocytosis signal motif.

As to quaternary structure, the mature envelope protein (Env) consists of a trimer of SU-TM heterodimers attached by a labile interchain disulfide bond. Specific enzymatic cleavages in vivo yield mature proteins. Envelope glycoproteins are synthesized as an inactive precursor that is N-glycosylated and processed likely by host cell furin or by a furin-like protease in the Golgi to yield the mature SU and TM proteins. The cleavage site between SU and TM requires the minimal sequence [KR]-X-[KR]-R. The R-peptide is released from the C-terminus of the cytoplasmic tail of the TM protein upon particle formation as a result of proteolytic cleavage by the viral protease. Cleavage of this peptide is required for TM to become fusogenic. In terms of processing, the CXXC motif is highly conserved across a broad range of retroviral envelope proteins. It is thought to participate in the formation of a labile disulfide bond possibly with the CX6CC motif present in the transmembrane protein. Isomerization of the intersubunit disulfide bond to an SU intrachain disulfide bond is thought to occur upon receptor recognition in order to allow membrane fusion. Post-translationally, the transmembrane protein is palmitoylated. The R-peptide is palmitoylated.

The protein localises to the virion membrane. It is found in the cell membrane. Its function is as follows. The surface protein (SU) attaches the virus to the host cell by binding to its receptor. This interaction triggers the refolding of the transmembrane protein (TM) and is thought to activate its fusogenic potential by unmasking its fusion peptide. Fusion occurs at the host cell plasma membrane. In terms of biological role, the transmembrane protein (TM) acts as a class I viral fusion protein. Under the current model, the protein has at least 3 conformational states: pre-fusion native state, pre-hairpin intermediate state, and post-fusion hairpin state. During viral and target cell membrane fusion, the coiled coil regions (heptad repeats) assume a trimer-of-hairpins structure, positioning the fusion peptide in close proximity to the C-terminal region of the ectodomain. The formation of this structure appears to drive apposition and subsequent fusion of viral and target cell membranes. Membranes fusion leads to delivery of the nucleocapsid into the cytoplasm. This is MLV-related proviral Env polyprotein from Mus musculus (Mouse).